The sequence spans 124 residues: Urease subunit beta (124 aa).

This sequence belongs to the urease beta subunit family. Heterotrimer of UreA (gamma), UreB (beta) and UreC (alpha) subunits. Three heterotrimers associate to form the active enzyme.

The protein localises to the cytoplasm. It catalyses the reaction urea + 2 H2O + H(+) = hydrogencarbonate + 2 NH4(+). It participates in nitrogen metabolism; urea degradation; CO(2) and NH(3) from urea (urease route): step 1/1. The chain is Urease subunit beta from Ureaplasma urealyticum serovar 10 (strain ATCC 33699 / Western).